A 74-amino-acid chain; its full sequence is Exodeoxyribonuclease 7 small subunit (74 aa).

This sequence belongs to the XseB family. In terms of assembly, heterooligomer composed of large and small subunits.

Its subcellular location is the cytoplasm. The catalysed reaction is Exonucleolytic cleavage in either 5'- to 3'- or 3'- to 5'-direction to yield nucleoside 5'-phosphates.. Its function is as follows. Bidirectionally degrades single-stranded DNA into large acid-insoluble oligonucleotides, which are then degraded further into small acid-soluble oligonucleotides. The polypeptide is Exodeoxyribonuclease 7 small subunit (Clostridium beijerinckii (strain ATCC 51743 / NCIMB 8052) (Clostridium acetobutylicum)).